A 467-amino-acid polypeptide reads, in one-letter code: Tel2-interacting protein 2 (467 aa).

Residues 4 to 45 (YKELARRLHTLQSKNEKEALEKQIDFLDKLVVEVDSLVHEQD) are a coiled coil.

The protein belongs to the TTI2 family. As to quaternary structure, component of the TTT complex composed of tel2, tti1 and tti2. Interacts with tel2 and ttiI1. Component of the ASTRA complex composed of at least rvb1, rvb2, tra1, tel2, tti1 and tti2.

The protein resides in the nucleus. Component of the tel2-tti1-tti2 (TTT) complex that stabilizes protein levels of the phosphatidylinositol 3-kinase-related protein kinase (PIKK) family proteins. The TTT complex is involved in the cellular resistance to DNA damage stresses, like ionizing radiation (IR), ultraviolet (UV) and mitomycin C (MMC). Component of the ASTRA complex involved in chromatin remodeling. This is Tel2-interacting protein 2 from Schizosaccharomyces pombe (strain 972 / ATCC 24843) (Fission yeast).